The primary structure comprises 276 residues: Urease accessory protein UreD (276 aa).

This sequence belongs to the UreD family. As to quaternary structure, ureD, UreF and UreG form a complex that acts as a GTP-hydrolysis-dependent molecular chaperone, activating the urease apoprotein by helping to assemble the nickel containing metallocenter of UreC. The UreE protein probably delivers the nickel.

The protein resides in the cytoplasm. Required for maturation of urease via the functional incorporation of the urease nickel metallocenter. In Bradyrhizobium diazoefficiens (strain JCM 10833 / BCRC 13528 / IAM 13628 / NBRC 14792 / USDA 110), this protein is Urease accessory protein UreD.